The following is a 473-amino-acid chain: MAIKTYQAGVKEYRQTYWQPDYVPLDTDILACFKITPQSGVDREEAAAAVAAESSCGTWTTVWTDLLTDLDYYKGRAYRIEDVPGDDARFYAFVAYPIDLFEEGSVVNVFTSLVGNVFGFKAIRALRLEDVRFPIAYVKTCGGPPSGIQVERDKMNKYGRPLLGCTIKPKLGLSAKNYGRAVYECLRGSLDFTKDDENINSQPFMRWRDRFEFVQEATLKAEAETGERKGHYLNVTAPTPEEMYKRAEFAKEIGAPIIMHDYLAGGLCANAGLANWCRNNGMLLHVHRAMHAVLDRNPHHGIHFRVLTKILRLSGGDHLHTGTVVGKLEGDRASTLGWIDLLRESFVPEDRSRGIFFDQDWGSMPGAFAVASGGIHVWHMPALVAIFGDDSVLQFGGGTLGHPWGNAAGAHANRVALEACVQARNEGRQIEKEGREILTAAAQHSPELKIAMETWKEIKFEFDTVDKLDIAHK.

Substrate contacts are provided by Asn116 and Thr166. Lys168 serves as the catalytic Proton acceptor. Residue Lys170 participates in substrate binding. The Mg(2+) site is built by Lys194, Asp196, and Glu197. An N6-carboxylysine modification is found at Lys194. Residue His287 is the Proton acceptor of the active site. 3 residues coordinate substrate: Arg288, His320, and Ser372.

It belongs to the RuBisCO large chain family. Type I subfamily. Heterohexadecamer of 8 large chains and 8 small chains. Mg(2+) serves as cofactor.

It catalyses the reaction 2 (2R)-3-phosphoglycerate + 2 H(+) = D-ribulose 1,5-bisphosphate + CO2 + H2O. It carries out the reaction D-ribulose 1,5-bisphosphate + O2 = 2-phosphoglycolate + (2R)-3-phosphoglycerate + 2 H(+). Functionally, ruBisCO catalyzes two reactions: the carboxylation of D-ribulose 1,5-bisphosphate, the primary event in carbon dioxide fixation, as well as the oxidative fragmentation of the pentose substrate. Both reactions occur simultaneously and in competition at the same active site. The protein is Ribulose bisphosphate carboxylase large chain of Nitrosomonas eutropha (strain DSM 101675 / C91 / Nm57).